A 1049-amino-acid chain; its full sequence is FERM, ARHGEF and pleckstrin domain-containing protein 1 (1049 aa).

Residues 1–37 (MGEIEQKPTPASRLGAPENSGISTLERGQKPPPTPSG) are disordered. 2 positions are modified to phosphoserine: Ser20 and Ser23. Thr24 bears the Phosphothreonine mark. Positions 40-320 (MTVKIQMLDD…EHHAFFRLFE (281 aa)) constitute an FERM domain. Residues Ser340, Ser373, Ser389, Ser403, Ser427, Ser433, and Ser437 each carry the phosphoserine modification. The tract at residues 361-537 (FERKHSKIHS…TDDEEEGRRK (177 aa)) is disordered. 2 stretches are compositionally biased toward polar residues: residues 371-395 (TRSL…SASL) and 402-412 (ESPSAQSCQQA). Low complexity predominate over residues 435–448 (SGSKAADGTAAAAP). Composition is skewed to polar residues over residues 473–492 (STGS…NSQG) and 499–514 (VTLS…QASP). Ser513 and Ser517 each carry phosphoserine. Residues 543–734 (KAYYIAKEVS…TEMVAQLHGT (192 aa)) enclose the DH domain. The 98-residue stretch at 763–860 (EFIRLGSLSK…WLEDIQMAID (98 aa)) folds into the PH 1 domain. Residues Ser837, Ser876, and Ser882 each carry the phosphoserine modification. The segment at 866 to 908 (NGPTPELLASSPPDNKSPDEATAADQESEDDLSASRTSLERQA) is disordered. The residue at position 887 (Thr887) is a Phosphothreonine. Residues Ser893, Ser900, and Ser903 each carry the phosphoserine modification. The 98-residue stretch at 936-1033 (ENQLSGNLLR…WMEVIRSATS (98 aa)) folds into the PH 2 domain.

As to quaternary structure, interacts with CADM1. Interacts with RAC1. As to expression, detected in forbrain (at protein level).

The protein resides in the cell membrane. The protein localises to the synapse. It localises to the synaptosome. It is found in the cytoplasm. Its subcellular location is the cytosol. The protein resides in the cell projection. The protein localises to the filopodium. It localises to the dendrite. It is found in the dendritic spine. Functionally, may play a role in semaphorin signaling. Functions as a guanine nucleotide exchange factor for RAC1. Plays a role in the assembly and disassembly of dendritic filopodia, the formation of dendritic spines, regulation of dendrite length and ultimately the formation of synapses. The protein is FERM, ARHGEF and pleckstrin domain-containing protein 1 (Farp1) of Rattus norvegicus (Rat).